Here is a 400-residue protein sequence, read N- to C-terminus: CCA-adding enzyme (400 aa).

Residues Gly28 and Arg31 each contribute to the ATP site. Gly28 and Arg31 together coordinate CTP. Positions 41 and 43 each coordinate Mg(2+). 5 residues coordinate ATP: Arg112, Asp155, Arg158, Arg161, and Arg164. Residues Arg112, Asp155, Arg158, Arg161, and Arg164 each contribute to the CTP site.

This sequence belongs to the tRNA nucleotidyltransferase/poly(A) polymerase family. Bacterial CCA-adding enzyme type 3 subfamily. As to quaternary structure, homodimer. Mg(2+) is required as a cofactor.

It carries out the reaction a tRNA precursor + 2 CTP + ATP = a tRNA with a 3' CCA end + 3 diphosphate. The enzyme catalyses a tRNA with a 3' CCA end + 2 CTP + ATP = a tRNA with a 3' CCACCA end + 3 diphosphate. In terms of biological role, catalyzes the addition and repair of the essential 3'-terminal CCA sequence in tRNAs without using a nucleic acid template. Adds these three nucleotides in the order of C, C, and A to the tRNA nucleotide-73, using CTP and ATP as substrates and producing inorganic pyrophosphate. tRNA 3'-terminal CCA addition is required both for tRNA processing and repair. Also involved in tRNA surveillance by mediating tandem CCA addition to generate a CCACCA at the 3' terminus of unstable tRNAs. While stable tRNAs receive only 3'-terminal CCA, unstable tRNAs are marked with CCACCA and rapidly degraded. This Staphylococcus epidermidis (strain ATCC 12228 / FDA PCI 1200) protein is CCA-adding enzyme.